A 172-amino-acid chain; its full sequence is CD-NTase-associated protein 7 (172 aa).

Residues 141–172 (AQSPGINGYLENDKTYSAGGRSLTRTSVRNFV) are required for binding to CdnC and to confer phage immunity.

It belongs to the bacterial HORMA family. HORMA1 subfamily. As to quaternary structure, forms complexes with CdnC with 1:1 and 2:2 stoichimetry, and a 1:1:6 CdnC:Cap7:Cap6 complex.

Its function is as follows. Sensor protein of a CBASS antivirus system. CBASS (cyclic oligonucleotide-based antiphage signaling system) provides immunity against bacteriophage. The CD-NTase protein synthesizes cyclic nucleotides in response to infection; these serve as specific second messenger signals. The signals activate a diverse range of effectors, leading to bacterial cell death and thus abortive phage infection. A type III-C(AAA) CBASS system. In terms of biological role, binds to a closure peptide (consensus His-Xaa-Xaa-Ile-Leu-Leu-Thr), which allows it to activate CdnC for second messenger synthesis. Functionally, protects E.coli strain JP313 against bacteriophage lambda cI- infection. When the cdnC-cap7-cap6-nucC operon is transformed into a susceptible strain it confers bacteriophage immunity. Mutations in the sensor (Cap7 also called HORMA) or effector proteins (CdnC, NucC) but not the disassembly protein (Cap6 also called Trip13) no longer confer immunity. The presence of the intact operon leads to culture collapse and cell death, which occurs before the phage has finished its replication cycle, thus protecting non-infected bacteria by aborting the phage infection and preventing its propagation. The sequence is that of CD-NTase-associated protein 7 from Escherichia coli (strain MS 115-1).